Consider the following 242-residue polypeptide: Carboxy-S-adenosyl-L-methionine synthase (242 aa).

S-adenosyl-L-methionine contacts are provided by residues Y39, 64–66, 89–90, 117–118, N132, and R199; these read GCS, DN, and DI.

The protein belongs to the class I-like SAM-binding methyltransferase superfamily. Cx-SAM synthase family. As to quaternary structure, homodimer.

The catalysed reaction is prephenate + S-adenosyl-L-methionine = carboxy-S-adenosyl-L-methionine + 3-phenylpyruvate + H2O. Catalyzes the conversion of S-adenosyl-L-methionine (SAM) to carboxy-S-adenosyl-L-methionine (Cx-SAM). The polypeptide is Carboxy-S-adenosyl-L-methionine synthase (Psychromonas ingrahamii (strain DSM 17664 / CCUG 51855 / 37)).